A 933-amino-acid polypeptide reads, in one-letter code: Bifunctional uridylyltransferase/uridylyl-removing enzyme (933 aa).

The segment at 1–379 (MAKISLKLDE…TFQRRKRKLA (379 aa)) is uridylyltransferase. A uridylyl-removing region spans residues 380-736 (GTSDFIVDNH…VKTHQFEAVT (357 aa)). An HD domain is found at 496 to 619 (VDEHLIRCIG…VQSVERLKLL (124 aa)). ACT domains are found at residues 737-818 (EITV…EMIE) and 848-922 (VIEV…GIAP).

Belongs to the GlnD family. Mg(2+) is required as a cofactor.

The catalysed reaction is [protein-PII]-L-tyrosine + UTP = [protein-PII]-uridylyl-L-tyrosine + diphosphate. It carries out the reaction [protein-PII]-uridylyl-L-tyrosine + H2O = [protein-PII]-L-tyrosine + UMP + H(+). Uridylyltransferase (UTase) activity is inhibited by glutamine, while glutamine activates uridylyl-removing (UR) activity. Modifies, by uridylylation and deuridylylation, the PII regulatory proteins (GlnB and homologs), in response to the nitrogen status of the cell that GlnD senses through the glutamine level. Under low glutamine levels, catalyzes the conversion of the PII proteins and UTP to PII-UMP and PPi, while under higher glutamine levels, GlnD hydrolyzes PII-UMP to PII and UMP (deuridylylation). Thus, controls uridylylation state and activity of the PII proteins, and plays an important role in the regulation of nitrogen fixation and metabolism. This Mesorhizobium japonicum (strain LMG 29417 / CECT 9101 / MAFF 303099) (Mesorhizobium loti (strain MAFF 303099)) protein is Bifunctional uridylyltransferase/uridylyl-removing enzyme.